We begin with the raw amino-acid sequence, 454 residues long: Tubulin alpha chain (454 aa).

The GTP site is built by glutamine 12, aspartate 72, serine 141, glycine 145, threonine 146, threonine 180, asparagine 207, and asparagine 229. Residue aspartate 72 coordinates Mg(2+). Glutamate 255 is a catalytic residue.

It belongs to the tubulin family. Dimer of alpha and beta chains. A typical microtubule is a hollow water-filled tube with an outer diameter of 25 nm and an inner diameter of 15 nM. Alpha-beta heterodimers associate head-to-tail to form protofilaments running lengthwise along the microtubule wall with the beta-tubulin subunit facing the microtubule plus end conferring a structural polarity. Microtubules usually have 13 protofilaments but different protofilament numbers can be found in some organisms and specialized cells. Mg(2+) is required as a cofactor.

The protein resides in the cytoplasm. The protein localises to the cytoskeleton. The catalysed reaction is GTP + H2O = GDP + phosphate + H(+). Functionally, tubulin is the major constituent of microtubules, a cylinder consisting of laterally associated linear protofilaments composed of alpha- and beta-tubulin heterodimers. Microtubules grow by the addition of GTP-tubulin dimers to the microtubule end, where a stabilizing cap forms. Below the cap, tubulin dimers are in GDP-bound state, owing to GTPase activity of alpha-tubulin. The sequence is that of Tubulin alpha chain (TUB1) from Colletotrichum orbiculare (strain 104-T / ATCC 96160 / CBS 514.97 / LARS 414 / MAFF 240422) (Cucumber anthracnose fungus).